The sequence spans 478 residues: Sodium-dependent phosphate transport protein 3 (478 aa).

Residues asparagine 28, asparagine 47, asparagine 56, and asparagine 69 are each glycosylated (N-linked (GlcNAc...) asparagine). 10 helical membrane passes run 98-118, 130-150, 183-203, 211-231, 273-293, 317-337, 341-361, 363-383, 405-425, and 442-462; these read ISYG…IFGA, SLLT…VIVI, SIAG…GGLI, FIFY…FTVI, LPLW…TIII, LPFI…DFLL, LLSL…LPSL, AVAL…LILI, YASF…IISS, and NVFF…LIFG.

Belongs to the major facilitator superfamily. Sodium/anion cotransporter family. In terms of tissue distribution, expressed in the liver, kidney, placenta, lung and thyroid (at protein level).

The protein localises to the apical cell membrane. It catalyses the reaction 3 Na(+)(out) + phosphate(out) = 3 Na(+)(in) + phosphate(in). The enzyme catalyses urate(out) + n chloride(in) = urate(in) + n chloride(out). In terms of biological role, acts as a membrane potential-dependent organic anion transporter, the transport requires a low concentration of chloride ions. Mediates chloride-dependent transport of urate. Can actively transport inorganic phosphate into cells via Na(+) cotransport. The protein is Sodium-dependent phosphate transport protein 3 (Slc17a2) of Mus musculus (Mouse).